The following is a 500-amino-acid chain: L-arabinose isomerase (500 aa).

Positions 306, 333, 350, and 450 each coordinate Mn(2+).

The protein belongs to the arabinose isomerase family. In terms of assembly, homohexamer. Mn(2+) is required as a cofactor.

It carries out the reaction beta-L-arabinopyranose = L-ribulose. It functions in the pathway carbohydrate degradation; L-arabinose degradation via L-ribulose; D-xylulose 5-phosphate from L-arabinose (bacterial route): step 1/3. In terms of biological role, catalyzes the conversion of L-arabinose to L-ribulose. The protein is L-arabinose isomerase of Yersinia pestis (strain Pestoides F).